The sequence spans 568 residues: Serine/threonine-protein kinase RIO1 (568 aa).

Disordered regions lie at residues 14-70 (GQFD…DDDW) and 83-109 (YVWNGGSNPQANRQTSDSSSAKMSTPA). Phosphoserine occurs at positions 21 and 22. Residues 24–38 (SENRDLKTVKEKDDI) show a composition bias toward basic and acidic residues. The span at 51–70 (GEGEIEDEEEEGYDDDDDDW) shows a compositional bias: acidic residues. A compositionally biased stretch (polar residues) spans 87–105 (GGSNPQANRQTSDSSSAKM). The region spanning 180–479 (TEINGCISTG…TGLKKDLSGV (300 aa)) is the Protein kinase domain. ATP is bound by residues Lys208, Ser278, and Ile280. Asp324 (proton acceptor) is an active-site residue. Mg(2+)-binding residues include Asn329 and Asp341. Asp341 serves as the catalytic 4-aspartylphosphate intermediate. Residues 490–568 (VEERTCSDSE…EKTAKTKKGK (79 aa)) are disordered. The span at 497–513 (DSEDIGSSECSDTDSEE) shows a compositional bias: acidic residues. Positions 514 to 543 (QGDHARPKKHTTDPDIDKKERKKMVKEAQR) are enriched in basic and acidic residues. The segment covering 544–568 (EKRKNKIPKHVKKRKEKTAKTKKGK) has biased composition (basic residues).

It belongs to the protein kinase superfamily. RIO-type Ser/Thr kinase family. As to quaternary structure, associates with the precursor of the 40S ribosome subunit. Interacts (via its N-terminus) with PRMT5 (via its N-terminus). Interacts with WDR77. Found in a PRMT5 complex composed of PRMT5, WDR77 and RIOK1. Interacts (via its C-terminus) with NCL; this interaction targets NCL for PRTM5 methylation. Mg(2+) serves as cofactor.

It is found in the cytoplasm. Its subcellular location is the cytosol. The enzyme catalyses L-seryl-[protein] + ATP = O-phospho-L-seryl-[protein] + ADP + H(+). It catalyses the reaction L-threonyl-[protein] + ATP = O-phospho-L-threonyl-[protein] + ADP + H(+). It carries out the reaction ATP + H2O = ADP + phosphate + H(+). Its function is as follows. Involved in the final steps of cytoplasmic maturation of the 40S ribosomal subunit. Involved in processing of 18S-E pre-rRNA to the mature 18S rRNA. Required for the recycling of NOB1 and PNO1 from the late 40S precursor. The association with the very late 40S subunit intermediate may involve a translation-like checkpoint point cycle preceeding the binding to the 60S ribosomal subunit. Despite the protein kinase domain is proposed to act predominantly as an ATPase. The catalytic activity regulates its dynamic association with the 40S subunit. In addition to its role in ribosomal biogenesis acts as an adapter protein by recruiting NCL/nucleolin the to PRMT5 complex for its symmetrical methylation. This Homo sapiens (Human) protein is Serine/threonine-protein kinase RIO1.